Here is a 235-residue protein sequence, read N- to C-terminus: Hydroxyacylglutathione hydrolase (235 aa).

Residues His53, His55, Asp57, His58, His109, Asp127, and His165 each coordinate Zn(2+).

The protein belongs to the metallo-beta-lactamase superfamily. Glyoxalase II family. In terms of assembly, monomer. The cofactor is Zn(2+).

It catalyses the reaction an S-(2-hydroxyacyl)glutathione + H2O = a 2-hydroxy carboxylate + glutathione + H(+). It functions in the pathway secondary metabolite metabolism; methylglyoxal degradation; (R)-lactate from methylglyoxal: step 2/2. Functionally, thiolesterase that catalyzes the hydrolysis of S-D-lactoyl-glutathione to form glutathione and D-lactic acid. In Actinobacillus pleuropneumoniae serotype 5b (strain L20), this protein is Hydroxyacylglutathione hydrolase.